The primary structure comprises 298 residues: Protease HtpX (298 aa).

2 consecutive transmembrane segments (helical) span residues 4 to 24 and 38 to 58; these read IGLF…TMNL and LGNL…VSLA. His145 contacts Zn(2+). Glu146 is an active-site residue. Residue His149 participates in Zn(2+) binding. 2 helical membrane passes run 160–180 and 194–214; these read LLQG…AYVV and ITFI…ASMI. A Zn(2+)-binding site is contributed by Glu223.

This sequence belongs to the peptidase M48B family. Zn(2+) is required as a cofactor.

It is found in the cell inner membrane. The polypeptide is Protease HtpX (Hydrogenovibrio crunogenus (strain DSM 25203 / XCL-2) (Thiomicrospira crunogena)).